The chain runs to 259 residues: UPF0246 protein PSPPH_1119 (259 aa).

This sequence belongs to the UPF0246 family.

This Pseudomonas savastanoi pv. phaseolicola (strain 1448A / Race 6) (Pseudomonas syringae pv. phaseolicola (strain 1448A / Race 6)) protein is UPF0246 protein PSPPH_1119.